The following is a 180-amino-acid chain: Meiotic recombination protein rec15 (180 aa).

Homomer. Interacts (via C-terminus) with hop1 (via C-terminus); the interaction is direct. Interacts (via C-terminus) with rec10; the interaction is direct. Interacts with mde2; the interaction is direct.

The protein localises to the nucleus. The protein resides in the chromosome. Required during the early stages of meiosis for meiotic recombination. This is Meiotic recombination protein rec15 from Schizosaccharomyces pombe (strain 972 / ATCC 24843) (Fission yeast).